Reading from the N-terminus, the 66-residue chain is Large ribosomal subunit protein uL29 (66 aa).

It belongs to the universal ribosomal protein uL29 family.

The sequence is that of Large ribosomal subunit protein uL29 from Francisella tularensis subsp. holarctica (strain LVS).